The primary structure comprises 190 residues: Transcription termination/antitermination protein NusG (190 aa).

Residues 138-166 (VGEIVTVTEGPFETFTGTVEEVDQEKARL) form the KOW domain.

The protein belongs to the NusG family.

Its function is as follows. Participates in transcription elongation, termination and antitermination. In Rickettsia bellii (strain RML369-C), this protein is Transcription termination/antitermination protein NusG.